A 623-amino-acid chain; its full sequence is Procollagen galactosyltransferase 1 (623 aa).

Positions 1 to 30 are cleaved as a signal peptide; that stretch reads MAAAPRACKGHGRPLPVLLLLLLLALPPLG. N-linked (GlcNAc...) asparagine glycosylation is found at asparagine 97, asparagine 185, and asparagine 382. Over residues 589-607 the composition is skewed to basic and acidic residues; it reads RAKSQKMREQQALSREAKN. A disordered region spans residues 589 to 623; it reads RAKSQKMREQQALSREAKNSDVLQSPLDSAARDEL. The Prevents secretion from ER signature appears at 620 to 623; the sequence is RDEL.

It belongs to the glycosyltransferase 25 family. N-glycosylated.

The protein resides in the endoplasmic reticulum lumen. It carries out the reaction (5R)-5-hydroxy-L-lysyl-[collagen] + UDP-alpha-D-galactose = (5R)-5-O-(beta-D-galactosyl)-5-hydroxy-L-lysyl-[collagen] + UDP + H(+). Beta-galactosyltransferase that transfers beta-galactose to hydroxylysine residues of type I collagen. By acting on collagen glycosylation, facilitates the formation of collagen triple helix. Also involved in the biosynthesis of collagen type IV. The chain is Procollagen galactosyltransferase 1 (COLGALT1) from Bos taurus (Bovine).